Here is a 397-residue protein sequence, read N- to C-terminus: Succinate--CoA ligase [ADP-forming] subunit beta (397 aa).

Residues 9-254 (KALLKGYGAP…ETEEDAKEIE (246 aa)) form the ATP-grasp domain. ATP contacts are provided by residues Lys46, 53–55 (GRG), Glu109, Ala112, and Glu117. Mg(2+) is bound by residues Asn209 and Asp223. Substrate-binding positions include Asn274 and 331-333 (GIM).

The protein belongs to the succinate/malate CoA ligase beta subunit family. As to quaternary structure, heterotetramer of two alpha and two beta subunits. Mg(2+) is required as a cofactor.

The catalysed reaction is succinate + ATP + CoA = succinyl-CoA + ADP + phosphate. The enzyme catalyses GTP + succinate + CoA = succinyl-CoA + GDP + phosphate. It functions in the pathway carbohydrate metabolism; tricarboxylic acid cycle; succinate from succinyl-CoA (ligase route): step 1/1. Its function is as follows. Succinyl-CoA synthetase functions in the citric acid cycle (TCA), coupling the hydrolysis of succinyl-CoA to the synthesis of either ATP or GTP and thus represents the only step of substrate-level phosphorylation in the TCA. The beta subunit provides nucleotide specificity of the enzyme and binds the substrate succinate, while the binding sites for coenzyme A and phosphate are found in the alpha subunit. This is Succinate--CoA ligase [ADP-forming] subunit beta from Rhizobium johnstonii (strain DSM 114642 / LMG 32736 / 3841) (Rhizobium leguminosarum bv. viciae).